The following is a 621-amino-acid chain: Phosphoenolpyruvate carboxykinase [GTP] (621 aa).

Residues arginine 82 and 220–222 (YGG) each bind substrate. Lysine 229 and histidine 249 together coordinate Mn(2+). Serine 271 contacts substrate. 272–277 (QCGKTN) contributes to the GTP binding site. Cysteine 273 is a catalytic residue. Aspartate 296 contributes to the Mn(2+) binding site. 386-388 (NSR) contributes to the substrate binding site. GTP-binding positions include arginine 388, arginine 419, and 514-517 (FGEN).

It belongs to the phosphoenolpyruvate carboxykinase [GTP] family. As to quaternary structure, monomer. Requires Mn(2+) as cofactor.

The protein resides in the cytoplasm. It catalyses the reaction oxaloacetate + GTP = phosphoenolpyruvate + GDP + CO2. It functions in the pathway carbohydrate biosynthesis; gluconeogenesis. In terms of biological role, catalyzes the conversion of oxaloacetate (OAA) to phosphoenolpyruvate (PEP), the rate-limiting step in the metabolic pathway that produces glucose from lactate and other precursors derived from the citric acid cycle. The sequence is that of Phosphoenolpyruvate carboxykinase [GTP] from Corynebacterium kroppenstedtii (strain DSM 44385 / JCM 11950 / CIP 105744 / CCUG 35717).